A 328-amino-acid polypeptide reads, in one-letter code: Beta-ketoacyl-[acyl-carrier-protein] synthase III (328 aa).

Catalysis depends on residues Cys122 and His255. The ACP-binding stretch occupies residues 256–260 (QANVR). Asn285 is a catalytic residue.

The protein belongs to the thiolase-like superfamily. FabH family. In terms of assembly, homodimer.

It localises to the cytoplasm. The enzyme catalyses malonyl-[ACP] + acetyl-CoA + H(+) = 3-oxobutanoyl-[ACP] + CO2 + CoA. It functions in the pathway lipid metabolism; fatty acid biosynthesis. In terms of biological role, catalyzes the condensation reaction of fatty acid synthesis by the addition to an acyl acceptor of two carbons from malonyl-ACP. Catalyzes the first condensation reaction which initiates fatty acid synthesis and may therefore play a role in governing the total rate of fatty acid production. Possesses both acetoacetyl-ACP synthase and acetyl transacylase activities. Its substrate specificity determines the biosynthesis of branched-chain and/or straight-chain of fatty acids. This chain is Beta-ketoacyl-[acyl-carrier-protein] synthase III, found in Bordetella pertussis (strain Tohama I / ATCC BAA-589 / NCTC 13251).